The following is an 869-amino-acid chain: Bifunctional uridylyltransferase/uridylyl-removing enzyme (869 aa).

Residues 1-332 (MTDTPAERPD…QFDGEATPEP (332 aa)) form a uridylyltransferase region. Residues 333–691 (LGGGFSLRRG…RRAVPDNDAL (359 aa)) are uridylyl-removing. One can recognise an HD domain in the interval 450 to 572 (VDQHTLMVLR…VGTRERLDYL (123 aa)). ACT domains lie at 692–774 (EVFV…RAVP) and 798–869 (RISL…LDPV).

It belongs to the GlnD family. Requires Mg(2+) as cofactor.

It carries out the reaction [protein-PII]-L-tyrosine + UTP = [protein-PII]-uridylyl-L-tyrosine + diphosphate. It catalyses the reaction [protein-PII]-uridylyl-L-tyrosine + H2O = [protein-PII]-L-tyrosine + UMP + H(+). Its activity is regulated as follows. Uridylyltransferase (UTase) activity is inhibited by glutamine, while glutamine activates uridylyl-removing (UR) activity. In terms of biological role, modifies, by uridylylation and deuridylylation, the PII regulatory proteins (GlnB and homologs), in response to the nitrogen status of the cell that GlnD senses through the glutamine level. Under low glutamine levels, catalyzes the conversion of the PII proteins and UTP to PII-UMP and PPi, while under higher glutamine levels, GlnD hydrolyzes PII-UMP to PII and UMP (deuridylylation). Thus, controls uridylylation state and activity of the PII proteins, and plays an important role in the regulation of nitrogen assimilation and metabolism. This chain is Bifunctional uridylyltransferase/uridylyl-removing enzyme, found in Xanthomonas euvesicatoria pv. vesicatoria (strain 85-10) (Xanthomonas campestris pv. vesicatoria).